The sequence spans 274 residues: Thymidylate synthase (274 aa).

Arg-21 is a binding site for dUMP. Position 51 (His-51) interacts with (6R)-5,10-methylene-5,6,7,8-tetrahydrofolate. Position 123-124 (123-124 (RR)) interacts with dUMP. Cys-156 functions as the Nucleophile in the catalytic mechanism. DUMP is bound by residues 176–179 (RSAD), Asn-187, and 217–219 (HIY). Asp-179 contacts (6R)-5,10-methylene-5,6,7,8-tetrahydrofolate. Residue Ala-273 coordinates (6R)-5,10-methylene-5,6,7,8-tetrahydrofolate.

It belongs to the thymidylate synthase family. Bacterial-type ThyA subfamily. Homodimer.

It localises to the cytoplasm. The catalysed reaction is dUMP + (6R)-5,10-methylene-5,6,7,8-tetrahydrofolate = 7,8-dihydrofolate + dTMP. It functions in the pathway pyrimidine metabolism; dTTP biosynthesis. In terms of biological role, catalyzes the reductive methylation of 2'-deoxyuridine-5'-monophosphate (dUMP) to 2'-deoxythymidine-5'-monophosphate (dTMP) while utilizing 5,10-methylenetetrahydrofolate (mTHF) as the methyl donor and reductant in the reaction, yielding dihydrofolate (DHF) as a by-product. This enzymatic reaction provides an intracellular de novo source of dTMP, an essential precursor for DNA biosynthesis. In Flavobacterium psychrophilum (strain ATCC 49511 / DSM 21280 / CIP 103535 / JIP02/86), this protein is Thymidylate synthase.